Consider the following 176-residue polypeptide: Co-chaperone protein HscB (176 aa).

Residues 2 to 74 (DYFTLFGLPA…LMRAEYLLSL (73 aa)) form the J domain.

This sequence belongs to the HscB family. Interacts with HscA and stimulates its ATPase activity. Interacts with IscU.

Its function is as follows. Co-chaperone involved in the maturation of iron-sulfur cluster-containing proteins. Seems to help targeting proteins to be folded toward HscA. The protein is Co-chaperone protein HscB of Escherichia coli O7:K1 (strain IAI39 / ExPEC).